Consider the following 342-residue polypeptide: Ribosomal RNA small subunit methyltransferase C (342 aa).

The protein belongs to the methyltransferase superfamily. RsmC family. As to quaternary structure, monomer.

The protein localises to the cytoplasm. The catalysed reaction is guanosine(1207) in 16S rRNA + S-adenosyl-L-methionine = N(2)-methylguanosine(1207) in 16S rRNA + S-adenosyl-L-homocysteine + H(+). Specifically methylates the guanine in position 1207 of 16S rRNA in the 30S particle. This is Ribosomal RNA small subunit methyltransferase C from Cronobacter sakazakii (strain ATCC BAA-894) (Enterobacter sakazakii).